Reading from the N-terminus, the 389-residue chain is Alpha-(1,3)-fucosyltransferase 7 (389 aa).

The Cytoplasmic segment spans residues 1 to 55; that stretch reads MPTPCPPACLSTPGTHRLLPFPDWKAPSWESRKEATCNSSSPGPWAEPTVQGYHP. The helical; Signal-anchor for type II membrane protein transmembrane segment at 56–78 threads the bilayer; sequence TRRLRAWGGLAGGATFMVIWFFW. The Lumenal segment spans residues 79 to 389; it reads LWGSAPGSAP…YEDLESWFQA (311 aa). Residues C115 and C123 are joined by a disulfide bond. N-linked (GlcNAc...) asparagine glycosylation occurs at N128. A disulfide bridge links C258 with C261. N338 carries an N-linked (GlcNAc...) asparagine glycan. A disulfide bridge links C365 with C368.

This sequence belongs to the glycosyltransferase 10 family. In terms of processing, N-glycosylated. As to expression, highly expressed in lung and bone marrow and to a much lesser extent in spleen, salivary gland and skeletal muscle.

It is found in the golgi apparatus. The protein localises to the golgi stack membrane. The enzyme catalyses an N-acetyl-alpha-neuraminyl-(2-&gt;3)-beta-D-galactosyl-(1-&gt;4)-N-acetyl-beta-D-glucosaminyl derivative + GDP-beta-L-fucose = an alpha-Neu5Ac-(2-&gt;3)-beta-D-Gal-(1-&gt;4)-[alpha-L-Fuc-(1-&gt;3)]-beta-D-GlcNAc derivative + GDP + H(+). It carries out the reaction an alpha-Neu5Ac-(2-&gt;3)-beta-D-Gal-(1-&gt;4)-beta-D-GlcNAc6S derivative + GDP-beta-L-fucose = an alpha-Neu5Ac-(2-&gt;3)-beta-D-Gal-(1-&gt;4)-[alpha-L-Fuc-(1-&gt;3)]-beta-D-GlcNAc6S derivative + GDP + H(+). It catalyses the reaction a neolactoside IV(3)-alpha-NeuAc-nLc4Cer + GDP-beta-L-fucose = a neolactoside IV(3)-alpha-NeuNAc,III(3)-alpha-Fuc-nLc4Cer + GDP + H(+). The catalysed reaction is a neolactoside VI(3)-alpha-NeuNAc-nLc6Cer + GDP-beta-L-fucose = a neolactoside VI(3)-alpha-NeuAc,V(3)-alphaFuc-nLc6Cer + GDP + H(+). The enzyme catalyses an alpha-Neu5Ac-(2-&gt;3)-beta-D-Gal-(1-&gt;4)-beta-D-GlcNAc-(1-&gt;3)-beta-D-Gal-(1-&gt;4)-[alpha-L-Fuc-(1-&gt;3)]-beta-D-GlcNAc derivative + GDP-beta-L-fucose = an alpha-Neu5Ac-(2-&gt;3)-beta-D-Gal-(1-&gt;4)-[alpha-L-Fuc-(1-&gt;3)]-beta-D-GlcNAc-(1-&gt;3)-beta-D-Gal-(1-&gt;4)-[alpha-L-Fuc-(1-&gt;3)]-beta-D-GlcNAc derivative + GDP + H(+). It carries out the reaction alpha-Neu5Ac-(2-&gt;3)-beta-D-Gal-(1-&gt;4)-beta-D-GlcNAc-(1-&gt;3)-beta-D-Gal-(1-&gt;4)-D-Glc + GDP-beta-L-fucose = alpha-Neu5Ac-(2-&gt;3)-beta-D-Gal-(1-&gt;4)-[alpha-L-Fuc-(1-&gt;3)]-beta-D-GlcNAc-(1-&gt;3)-beta-D-Gal-(1-&gt;4)-D-Glc + GDP + H(+). It catalyses the reaction alpha-Neu5Ac-(2-&gt;3)-beta-D-Gal-(1-&gt;4)-beta-D-GlcNAc-(1-&gt;3)-beta-D-Gal-(1-&gt;4)-[alpha-L-Fuc-(1-&gt;3)]-beta-D-GlcNAc-(1-&gt;3)-beta-D-Gal-(1-&gt;4)-beta-D-GlcNAc + GDP-beta-L-fucose = alpha-Neu5Ac-(2-&gt;3)-beta-D-Gal-(1-&gt;4)-[alpha-L-Fuc-(1-&gt;3)]-beta-D-GlcNAc-(1-&gt;3)-beta-D-Gal-(1-&gt;4)-[alpha-L-Fuc-(1-&gt;3)]-beta-D-GlcNAc-(1-&gt;3)-beta-D-Gal-(1-&gt;4)-beta-D-GlcNAc + GDP + H(+). The catalysed reaction is alpha-Neu5Ac-(2-&gt;3)-beta-D-Gal-(1-&gt;4)-beta-D-GlcNAc-(1-&gt;3)-beta-D-Gal-(1-&gt;4)-beta-D-GlcNAc-(1-&gt;3)-beta-D-Gal-(1-&gt;4)-beta-D-GlcNAc + GDP-beta-L-fucose = alpha-Neu5Ac-(2-&gt;3)-beta-D-Gal-(1-&gt;4)-[alpha-L-Fuc-(1-&gt;3)]-beta-D-GlcNAc-(1-&gt;3)-beta-D-Gal-(1-&gt;4)-beta-D-GlcNAc-(1-&gt;3)-beta-D-Gal-(1-&gt;4)-beta-D-GlcNAc + GDP + H(+). Its pathway is protein modification; protein glycosylation. Inhibited by NaCl. Inhibited by GDP in a concentration dependent manner, with an IC(50) value of 93 uM. Also inhibited by GMP and GTP. Inhibited by N-ethylmaleimide. Activated by poly(ethylene glycol) by enhancing the thermal stability of FUT7. Activated by Mn2+, Ca2+, and Mg2+. Both panosialin A and B inhibit activity with IC(50) values of 4.8 and 5.3 ug/ml, respectively. Inhibited by gallic acid (GA) and (-)-epigallocatechin gallate (EGCG) in a time-dependent and irreversible manner with IC(50) values of 60 and 700 nM, respectively. Its function is as follows. Catalyzes the transfer of L-fucose, from a guanosine diphosphate-beta-L-fucose, to the N-acetyl glucosamine (GlcNAc) of a distal alpha2,3 sialylated lactosamine unit of a glycoprotein or a glycolipid-linked sialopolylactosamines chain through an alpha-1,3 glycosidic linkage and participates in the final fucosylation step in the biosynthesis of the sialyl Lewis X (sLe(x)), a carbohydrate involved in cell and matrix adhesion during leukocyte trafficking and fertilization. In vitro, also synthesizes sialyl-dimeric-Lex structures, from VIM-2 structures and both di-fucosylated and trifucosylated structures from mono-fucosylated precursors. However does not catalyze alpha 1-3 fucosylation when an internal alpha 1-3 fucosylation is present in polylactosamine chain and the fucosylation rate of the internal GlcNAc residues is reduced once fucose has been added to the distal GlcNAc. Also catalyzes the transfer of a fucose from GDP-beta-fucose to the 6-sulfated a(2,3)sialylated substrate to produce 6-sulfo sLex mediating significant L-selectin-dependent cell adhesion. Through sialyl-Lewis(x) biosynthesis, can control SELE- and SELP-mediated cell adhesion with leukocytes and allows leukocytes tethering and rolling along the endothelial tissue thereby enabling the leukocytes to accumulate at a site of inflammation. May enhance embryo implantation through sialyl Lewis X (sLeX)-mediated adhesion of embryo cells to endometrium. May affect insulin signaling by up-regulating the phosphorylation and expression of some signaling molecules involved in the insulin-signaling pathway through SLe(x) which is present on the glycans of the INSRR alpha subunit. The protein is Alpha-(1,3)-fucosyltransferase 7 of Mus musculus (Mouse).